Here is a 162-residue protein sequence, read N- to C-terminus: Translocator protein 2 (162 aa).

5 helical membrane passes run 3–23 (LQGP…CMLI), 44–64 (VILL…YLVW), 79–99 (LGLY…FLAA), 103–123 (GLAL…VFIW), and 129–149 (LAAL…AITY).

This sequence belongs to the TspO/BZRP family. As to quaternary structure, homotetramer. May also form homodimer. As to expression, expressed in liver, bone marrow and spleen. In spleen, detected in red pulp but not in white pulp.

The protein localises to the endoplasmic reticulum membrane. It localises to the cell membrane. In terms of biological role, cholesterol-binding protein involved in the redistribution of cholesterol from lipid droplets to the endoplasmic reticulum. Required to meet cholesterol demands during erythropoietic differentiation. May play a role in transport processes at the plasma membrane of erythrocytes, including regulating VDAC-mediated ATP export, and import of the heme precursors protoporphyrin IX and 5-aminolevulinic acid. The polypeptide is Translocator protein 2 (Tspo2) (Mus musculus (Mouse)).